Here is a 345-residue protein sequence, read N- to C-terminus: Phosphoribosylformylglycinamidine cyclo-ligase (345 aa).

This sequence belongs to the AIR synthase family.

Its subcellular location is the cytoplasm. The enzyme catalyses 2-formamido-N(1)-(5-O-phospho-beta-D-ribosyl)acetamidine + ATP = 5-amino-1-(5-phospho-beta-D-ribosyl)imidazole + ADP + phosphate + H(+). It participates in purine metabolism; IMP biosynthesis via de novo pathway; 5-amino-1-(5-phospho-D-ribosyl)imidazole from N(2)-formyl-N(1)-(5-phospho-D-ribosyl)glycinamide: step 2/2. In Prochlorococcus marinus (strain MIT 9313), this protein is Phosphoribosylformylglycinamidine cyclo-ligase.